The following is a 283-amino-acid chain: Pantothenate synthetase (283 aa).

An ATP-binding site is contributed by 31 to 38; that stretch reads MGALHDGH. The active-site Proton donor is H38. Q62 contributes to the (R)-pantoate binding site. Residue Q62 coordinates beta-alanine. 148–151 serves as a coordination point for ATP; sequence GKKD. A (R)-pantoate-binding site is contributed by Q154. Residues V177 and 185-188 contribute to the ATP site; that span reads KSSR.

This sequence belongs to the pantothenate synthetase family. Homodimer.

It is found in the cytoplasm. It catalyses the reaction (R)-pantoate + beta-alanine + ATP = (R)-pantothenate + AMP + diphosphate + H(+). The protein operates within cofactor biosynthesis; (R)-pantothenate biosynthesis; (R)-pantothenate from (R)-pantoate and beta-alanine: step 1/1. In terms of biological role, catalyzes the condensation of pantoate with beta-alanine in an ATP-dependent reaction via a pantoyl-adenylate intermediate. The polypeptide is Pantothenate synthetase (Staphylococcus aureus (strain MRSA252)).